The primary structure comprises 306 residues: Probable cobalamin biosynthesis protein CobD (306 aa).

5 helical membrane passes run 54-74, 88-108, 155-175, 215-235, and 286-306; these read LFGF…TYEI, ISIY…IEFS, ITDS…PGAF, IAGM…KSAI, and SLKA…VLLM.

The protein belongs to the CobD/CbiB family.

The protein localises to the cell membrane. The protein operates within cofactor biosynthesis; adenosylcobalamin biosynthesis. In terms of biological role, converts cobyric acid to cobinamide by the addition of aminopropanol on the F carboxylic group. The polypeptide is Probable cobalamin biosynthesis protein CobD (Methanococcus maripaludis (strain C7 / ATCC BAA-1331)).